The sequence spans 56 residues: Bdellin B-3 (56 aa).

The 42-residue stretch at 1-42 (DTECVCTKELHRVCGSDGVTYDNECLATCHGASVAHDHACEG) folds into the Kazal-like domain. Cystine bridges form between Cys4–Cys29, Cys6–Cys25, and Cys14–Cys40.

Its function is as follows. Proteinase inhibitor. Blocks the activity of trypsin, plasmin and sperm acrosin. The chain is Bdellin B-3 from Hirudo medicinalis (Medicinal leech).